The following is a 185-amino-acid chain: Ribosome-recycling factor (185 aa).

This sequence belongs to the RRF family.

It localises to the cytoplasm. In terms of biological role, responsible for the release of ribosomes from messenger RNA at the termination of protein biosynthesis. May increase the efficiency of translation by recycling ribosomes from one round of translation to another. This Streptococcus suis (strain 98HAH33) protein is Ribosome-recycling factor.